Consider the following 39-residue polypeptide: Cytochrome b559 subunit beta (39 aa).

Residues 14-30 (WLAVHGLAVPTVFFLGS) form a helical membrane-spanning segment. His18 contacts heme.

It belongs to the PsbE/PsbF family. Heterodimer of an alpha subunit and a beta subunit. PSII is composed of 1 copy each of membrane proteins PsbA, PsbB, PsbC, PsbD, PsbE, PsbF, PsbH, PsbI, PsbJ, PsbK, PsbL, PsbM, PsbT, PsbX, PsbY, PsbZ, Psb30/Ycf12, at least 3 peripheral proteins of the oxygen-evolving complex and a large number of cofactors. It forms dimeric complexes. It depends on heme b as a cofactor.

Its subcellular location is the plastid membrane. In terms of biological role, this b-type cytochrome is tightly associated with the reaction center of photosystem II (PSII). PSII is a light-driven water:plastoquinone oxidoreductase that uses light energy to abstract electrons from H(2)O, generating O(2) and a proton gradient subsequently used for ATP formation. It consists of a core antenna complex that captures photons, and an electron transfer chain that converts photonic excitation into a charge separation. This is Cytochrome b559 subunit beta from Cuscuta europaea (European dodder).